We begin with the raw amino-acid sequence, 241 residues long: 1-(5-phosphoribosyl)-5-[(5-phosphoribosylamino)methylideneamino] imidazole-4-carboxamide isomerase (241 aa).

The Proton acceptor role is filled by Asp-10. Asp-131 acts as the Proton donor in catalysis.

This sequence belongs to the HisA/HisF family.

Its subcellular location is the cytoplasm. It carries out the reaction 1-(5-phospho-beta-D-ribosyl)-5-[(5-phospho-beta-D-ribosylamino)methylideneamino]imidazole-4-carboxamide = 5-[(5-phospho-1-deoxy-D-ribulos-1-ylimino)methylamino]-1-(5-phospho-beta-D-ribosyl)imidazole-4-carboxamide. The protein operates within amino-acid biosynthesis; L-histidine biosynthesis; L-histidine from 5-phospho-alpha-D-ribose 1-diphosphate: step 4/9. This chain is 1-(5-phosphoribosyl)-5-[(5-phosphoribosylamino)methylideneamino] imidazole-4-carboxamide isomerase, found in Bifidobacterium longum (strain DJO10A).